A 582-amino-acid chain; its full sequence is Aspartate--tRNA ligase (582 aa).

Glutamate 174 serves as a coordination point for L-aspartate. The interval 198–201 is aspartate; the sequence is QITK. Residue arginine 220 coordinates L-aspartate. ATP-binding positions include 220–222 and glutamine 229; that span reads RDE. Histidine 443 serves as a coordination point for L-aspartate. Residue glutamate 477 coordinates ATP. Arginine 484 contacts L-aspartate. 529-532 is an ATP binding site; sequence GLDR.

Belongs to the class-II aminoacyl-tRNA synthetase family. Type 1 subfamily. Homodimer.

The protein resides in the cytoplasm. It catalyses the reaction tRNA(Asp) + L-aspartate + ATP = L-aspartyl-tRNA(Asp) + AMP + diphosphate. Catalyzes the attachment of L-aspartate to tRNA(Asp) in a two-step reaction: L-aspartate is first activated by ATP to form Asp-AMP and then transferred to the acceptor end of tRNA(Asp). This chain is Aspartate--tRNA ligase, found in Streptococcus pyogenes serotype M18 (strain MGAS8232).